Here is a 253-residue protein sequence, read N- to C-terminus: CD151 antigen (253 aa).

Over 1–18 (MGEFNEKKTTCGTVCLKY) the chain is Cytoplasmic. Residues cysteine 11 and cysteine 15 are each lipidated (S-palmitoyl cysteine). Residues 19–39 (LLFTYNCCFWLAGLAVMAVGI) traverse the membrane as a helical segment. Over 40 to 57 (WTLALKSDYISLLASGTY) the chain is Extracellular. A helical membrane pass occupies residues 58 to 78 (LATAYILVVAGAVVMVTGVLG). Residues 79–91 (CCATFKERRNLLR) lie on the Cytoplasmic side of the membrane. The chain crosses the membrane as a helical span at residues 92 to 112 (LYFILLLIIFLLEIIAGVLAY). Residues 113-221 (VYYQQLNTEL…LETFIQEHLR (109 aa)) lie on the Extracellular side of the membrane. A glycan (N-linked (GlcNAc...) asparagine) is linked at asparagine 159. The helical transmembrane segment at 222 to 242 (VIGAVGTGIACVQVFGMIFTC) threads the bilayer. Residues cysteine 242 and cysteine 243 are each lipidated (S-palmitoyl cysteine). Topologically, residues 243-253 (CLYRSLKLEHY) are cytoplasmic.

It belongs to the tetraspanin (TM4SF) family. As to quaternary structure, interacts with integrins ITGA3:ITGB1, ITGA5:ITGB1, ITGA3:ITGB1 and ITGA6:ITGB4 and with CD9 and CD181. Interacts (via the second extracellular domain) with integrin ITGAV:ITGB3. Interacts with ITGA3; this interaction modulates ITGA3 glycosylation pattern. Interacts with F11R. Interacts with RAC1 and CDC42; these interactions mediate physical association of RAC1 and CDC42 with integrin adhesion receptor complexes. Palmitoylated. Palmitoylation by ZDHHC2 regulates CD151 expression, association with other tetraspanin family proteins and function in cell adhesion. Post-translationally, ubiquitinated by RNF128 on lysine residues present in the tetraspanin amino terminus via 'Lys-48'-linked ubiquitin leading to proteasomal degradation.

The protein resides in the cell membrane. Its function is as follows. Structural component of specialized membrane microdomains known as tetraspanin-enriched microdomains (TERMs), which act as platforms for receptor clustering and signaling. Plays a role in various cellular and molecular mechanism through its association with both integrin and non-integrin proteins. These interactions facilitate critical cellular functions, including cell-to-cell communication, wound healing, platelet aggregation, trafficking, cell motility, and angiogenesis. Via interaction with JAM-A/F11R and integrin ITGA3:ITGB1, promotes the recruitment of signaling molecules such as RAC1, CDC42 and RhoGTPases to facilitate the polarization of epithelial cells and the reorganization of the actin cytoskeleton, which are critical steps in cell migration process. Regulates the glycosylation pattern of ITGA3:ITGB1 thereby modulating its activity. Plays an essential role in the maintenance of central laminin-binding integrin ITGA6:ITGB4-containing adhesion complexes. Essential for the proper assembly of the glomerular and tubular basement membranes in kidney. Contributes to T-cell activation by modulating integrin signaling leading to activation of downstream targets PTK2 and MAPK1/MAPK3. The chain is CD151 antigen (CD151) from Chlorocebus aethiops (Green monkey).